The primary structure comprises 265 residues: H-2 class II histocompatibility antigen, A-D beta chain (265 aa).

The signal sequence occupies residues 1–27 (MALQIPSLLLSAAVVVLMVLSSPRTEG). The tract at residues 28-122 (GNSERHFVVQ…PETSTSLRRL (95 aa)) is beta-1. Over 28-226 (GNSERHFVVQ…RAQSESARSK (199 aa)) the chain is Extracellular. Disulfide bonds link C42–C106 and C145–C201. N46 carries an N-linked (GlcNAc...) asparagine glycan. The interval 123–216 (EQPNVAISLS…SLKSPITVEW (94 aa)) is beta-2. Positions 125–213 (PNVAISLSRT…EHPSLKSPIT (89 aa)) constitute an Ig-like C1-type domain. The segment at 217 to 226 (RAQSESARSK) is connecting peptide. Residues 227-247 (MLSGIGGCVLGVIFLGLGLFI) traverse the membrane as a helical segment. Residues 248–265 (RHRSQKGPRGPPPAGLLQ) lie on the Cytoplasmic side of the membrane.

This sequence belongs to the MHC class II family. In terms of processing, ubiquitinated in immature dendritic cells leading to down-regulation of MHC class II.

The protein resides in the membrane. The polypeptide is H-2 class II histocompatibility antigen, A-D beta chain (H2-Ab1) (Mus musculus (Mouse)).